Here is a 37-residue protein sequence, read N- to C-terminus: Large ribosomal subunit protein bL36 (37 aa).

This sequence belongs to the bacterial ribosomal protein bL36 family.

The sequence is that of Large ribosomal subunit protein bL36 from Thermobifida fusca (strain YX).